The sequence spans 449 residues: Tubulin beta-7 chain (449 aa).

GTP contacts are provided by Q11, E69, S138, G142, T143, G144, N204, and N226. E69 contributes to the Mg(2+) binding site. The disordered stretch occupies residues 422 to 449 (YQQYQDATADEEGEYEEEEAEYEQEETY). Over residues 429 to 449 (TADEEGEYEEEEAEYEQEETY) the composition is skewed to acidic residues.

Belongs to the tubulin family. Dimer of alpha and beta chains. A typical microtubule is a hollow water-filled tube with an outer diameter of 25 nm and an inner diameter of 15 nM. Alpha-beta heterodimers associate head-to-tail to form protofilaments running lengthwise along the microtubule wall with the beta-tubulin subunit facing the microtubule plus end conferring a structural polarity. Microtubules usually have 13 protofilaments but different protofilament numbers can be found in some organisms and specialized cells. Mg(2+) serves as cofactor.

The protein resides in the cytoplasm. It localises to the cytoskeleton. Functionally, tubulin is the major constituent of microtubules, a cylinder consisting of laterally associated linear protofilaments composed of alpha- and beta-tubulin heterodimers. Microtubules grow by the addition of GTP-tubulin dimers to the microtubule end, where a stabilizing cap forms. Below the cap, tubulin dimers are in GDP-bound state, owing to GTPase activity of alpha-tubulin. This chain is Tubulin beta-7 chain (TUBB7), found in Arabidopsis thaliana (Mouse-ear cress).